We begin with the raw amino-acid sequence, 97 residues long: Acylphosphatase (97 aa).

The region spanning 11–97 (TYYVRVRGTV…EKRYERFEQH (87 aa)) is the Acylphosphatase-like domain. Residues R26 and N44 contribute to the active site. The segment at 76-97 (RVTEVSGEERSTEKRYERFEQH) is disordered. The span at 82–97 (GEERSTEKRYERFEQH) shows a compositional bias: basic and acidic residues.

The protein belongs to the acylphosphatase family.

The catalysed reaction is an acyl phosphate + H2O = a carboxylate + phosphate + H(+). This is Acylphosphatase (acyP) from Paraburkholderia xenovorans (strain LB400).